A 334-amino-acid chain; its full sequence is Protein-methionine-sulfoxide reductase catalytic subunit MsrP (334 aa).

The tat-type signal signal peptide spans 1-44 (MKKNQFLKESDVTAESVFFMKRRQVLKALGISAAALSLPHAAHA). Mo-molybdopterin contacts are provided by residues N88, 91–92 (YE), C146, T181, N233, R238, and 249–251 (GIK).

It belongs to the MsrP family. Heterodimer of a catalytic subunit (MsrP) and a heme-binding subunit (MsrQ). It depends on Mo-molybdopterin as a cofactor. Post-translationally, predicted to be exported by the Tat system. The position of the signal peptide cleavage has not been experimentally proven.

It is found in the periplasm. It catalyses the reaction L-methionyl-[protein] + a quinone + H2O = L-methionyl-(S)-S-oxide-[protein] + a quinol. The catalysed reaction is L-methionyl-[protein] + a quinone + H2O = L-methionyl-(R)-S-oxide-[protein] + a quinol. Functionally, part of the MsrPQ system that repairs oxidized periplasmic proteins containing methionine sulfoxide residues (Met-O), using respiratory chain electrons. Thus protects these proteins from oxidative-stress damage caused by reactive species of oxygen and chlorine generated by the host defense mechanisms. MsrPQ is essential for the maintenance of envelope integrity under bleach stress, rescuing a wide series of structurally unrelated periplasmic proteins from methionine oxidation, including the primary periplasmic chaperone SurA and the lipoprotein Pal. The catalytic subunit MsrP is non-stereospecific, being able to reduce both (R-) and (S-) diastereoisomers of methionine sulfoxide. The protein is Protein-methionine-sulfoxide reductase catalytic subunit MsrP of Shigella boydii serotype 18 (strain CDC 3083-94 / BS512).